The following is a 176-amino-acid chain: ADP-ribosylation factor-like protein 8d (176 aa).

Residues 21–26 (NSGKTS), 40–43 (MIPT), 62–66 (DLGGQ), and 121–124 (NKID) each bind GTP.

Belongs to the small GTPase superfamily. Arf family. As to quaternary structure, interacts with tubulin.

The protein localises to the late endosome membrane. Its subcellular location is the lysosome membrane. The protein resides in the cytoplasm. It localises to the cytoskeleton. It is found in the spindle. In terms of biological role, may play a role in lysosome motility. May play a role in chromosome segregation. The polypeptide is ADP-ribosylation factor-like protein 8d (Arabidopsis thaliana (Mouse-ear cress)).